Reading from the N-terminus, the 43-residue chain is Ferritin light chain (43 aa).

Residues 1–43 enclose the Ferritin-like diiron domain; that stretch reads MEAALLVEKNLNQALLDLHGLASARGDPHICDFLENHFLDEEV.

It belongs to the ferritin family. As to quaternary structure, oligomer of 24 subunits. There are two types of subunits: L (light) chain and H (heavy) chain. The major chain can be light or heavy, depending on the species and tissue type. The functional molecule forms a roughly spherical shell with a diameter of 12 nm and contains a central cavity into which the insoluble mineral iron core is deposited. Interacts with NCOA4.

Its subcellular location is the cytoplasmic vesicle. The protein resides in the autophagosome. It localises to the cytoplasm. The protein localises to the autolysosome. Functionally, stores iron in a soluble, non-toxic, readily available form. Important for iron homeostasis. Iron is taken up in the ferrous form and deposited as ferric hydroxides after oxidation. Also plays a role in delivery of iron to cells. Mediates iron uptake in capsule cells of the developing kidney. Delivery to lysosomes by the cargo receptor NCOA4 for autophagic degradation and release or iron. The chain is Ferritin light chain (FTL) from Ovis aries (Sheep).